Reading from the N-terminus, the 412-residue chain is Serine hydroxymethyltransferase (412 aa).

(6S)-5,6,7,8-tetrahydrofolate is bound by residues leucine 120 and 124 to 126; that span reads GHL. The residue at position 228 (lysine 228) is an N6-(pyridoxal phosphate)lysine. 353-355 contributes to the (6S)-5,6,7,8-tetrahydrofolate binding site; the sequence is SPF.

This sequence belongs to the SHMT family. In terms of assembly, homodimer. Requires pyridoxal 5'-phosphate as cofactor.

The protein resides in the cytoplasm. The enzyme catalyses (6R)-5,10-methylene-5,6,7,8-tetrahydrofolate + glycine + H2O = (6S)-5,6,7,8-tetrahydrofolate + L-serine. It participates in one-carbon metabolism; tetrahydrofolate interconversion. It functions in the pathway amino-acid biosynthesis; glycine biosynthesis; glycine from L-serine: step 1/1. Functionally, catalyzes the reversible interconversion of serine and glycine with tetrahydrofolate (THF) serving as the one-carbon carrier. This reaction serves as the major source of one-carbon groups required for the biosynthesis of purines, thymidylate, methionine, and other important biomolecules. Also exhibits THF-independent aldolase activity toward beta-hydroxyamino acids, producing glycine and aldehydes, via a retro-aldol mechanism. The polypeptide is Serine hydroxymethyltransferase (Lachnoclostridium phytofermentans (strain ATCC 700394 / DSM 18823 / ISDg) (Clostridium phytofermentans)).